Consider the following 305-residue polypeptide: RNA-binding protein rnp-1 (305 aa).

One can recognise an RRM domain in the interval Ser3 to Ser72. Residues Cys84–Cys97 form a CCHC-type zinc finger. The disordered stretch occupies residues Gln284–Tyr305. Residues Ala296–Tyr305 show a composition bias toward pro residues.

In terms of tissue distribution, expressed throughout the germline.

Its function is as follows. RNA-binding protein that is required for the germ line to transition from spermatogenesis to oogenesis and allow for normal oocyte development. In Caenorhabditis elegans, this protein is RNA-binding protein rnp-1.